The sequence spans 208 residues: Large ribosomal subunit protein bL25 (208 aa).

The tract at residues 1-20 (MANHQIKAQRRKDEGKGASR) is disordered.

Belongs to the bacterial ribosomal protein bL25 family. CTC subfamily. In terms of assembly, part of the 50S ribosomal subunit; part of the 5S rRNA/L5/L18/L25 subcomplex. Contacts the 5S rRNA. Binds to the 5S rRNA independently of L5 and L18.

This is one of the proteins that binds to the 5S RNA in the ribosome where it forms part of the central protuberance. The chain is Large ribosomal subunit protein bL25 from Xylella fastidiosa (strain 9a5c).